The sequence spans 453 residues: MKGISKILSASIMVMKLGNVYSAVPLCSNTYDPSQQQPSYVLIPSTPEAITNCAYSPKNAYVPSSPTTSSSTPGTNNDNETSPTTEDVGTCKISVVKHCDTPGASSTPCEPEQTIPAQPVTMATVTPAIIASVQTPSVVSVIPVTQKVIQPATMIVPPSSIIPGYYPNGTPAAPGQQGQILSGSVLAPGASSCQLVPGNTPGQMLPGMTPGVSPCLPTQGGDGSNQTIPGIVYPCQPGQGGSGSNQTIPGVISPCQPGQGGSGSNQTIPGIVYPCQPGQGGSGSNQTIPGVISPCQPGQGGSGSNQTIPGIVYPCQPGQNGDGSNQTIPGVISPCQPGQGGNGNGTTGQPGQCVSVPQTPNPIAMPPISGISGNGYPTSTTYTQSLGQLGPCIDVQKPTSSCESQTNEKSTMQYAMEACAAPTPTVVIGNSEYLVGPGMYSSLTSPCNSCCQC.

An N-terminal signal peptide occupies residues 1-22 (MKGISKILSASIMVMKLGNVYS). Residues 61–87 (YVPSSPTTSSSTPGTNNDNETSPTTED) are disordered. Residues 63-73 (PSSPTTSSSTP) show a composition bias toward low complexity. The span at 74 to 87 (GTNNDNETSPTTED) shows a compositional bias: polar residues. Asn79, Asn225, Asn245, Asn265, Asn285, Asn305, Asn325, and Asn344 each carry an N-linked (GlcNAc...) asparagine glycan. 6 tandem repeats follow at residues 214-233 (PCLPTQGGDGSNQTIPGIVY), 234-253 (PCQPGQGGSGSNQTIPGVIS), 254-273 (PCQPGQGGSGSNQTIPGIVY), 274-293 (PCQPGQGGSGSNQTIPGVIS), 294-313 (PCQPGQGGSGSNQTIPGIVY), and 314-333 (PCQPGQNGDGSNQTIPGVIS). Residues 214–333 (PCLPTQGGDG…SNQTIPGVIS (120 aa)) are 6 X 20 AA approximate tandem repeats.

In terms of processing, O-mannosylated. O-mannosylation has functional significance for the ability of microsporidia to invade their host cells.

It localises to the spore polar tube. Its function is as follows. Involved in formation of a polar tube through which the infectious agent is passed on to the host cell. This is Polar tube protein 1 (PTP1) from Encephalitozoon hellem (Microsporidian parasite).